We begin with the raw amino-acid sequence, 458 residues long: ATP synthase subunit beta (458 aa).

Position 148–155 (148–155 (GGAGVGKT)) interacts with ATP.

The protein belongs to the ATPase alpha/beta chains family. As to quaternary structure, F-type ATPases have 2 components, CF(1) - the catalytic core - and CF(0) - the membrane proton channel. CF(1) has five subunits: alpha(3), beta(3), gamma(1), delta(1), epsilon(1). CF(0) has three main subunits: a(1), b(2) and c(9-12). The alpha and beta chains form an alternating ring which encloses part of the gamma chain. CF(1) is attached to CF(0) by a central stalk formed by the gamma and epsilon chains, while a peripheral stalk is formed by the delta and b chains.

It is found in the cell inner membrane. It catalyses the reaction ATP + H2O + 4 H(+)(in) = ADP + phosphate + 5 H(+)(out). Its function is as follows. Produces ATP from ADP in the presence of a proton gradient across the membrane. The catalytic sites are hosted primarily by the beta subunits. The chain is ATP synthase subunit beta from Shewanella halifaxensis (strain HAW-EB4).